The primary structure comprises 460 residues: Mercuric reductase (460 aa).

In terms of domain architecture, HMA spans 1–65; it reads MTHLKITGMT…AVAGLGYKAM (65 aa). Positions 11 and 14 each coordinate a metal cation. FAD is bound by residues Ala-110, Gly-130, and Thr-135. The cysteines at positions 136 and 141 are disulfide-linked. Residues Lys-145 and Ala-211 each coordinate FAD. Positions 457 and 458 each coordinate Hg(2+).

Belongs to the class-I pyridine nucleotide-disulfide oxidoreductase family. Homodimer. It depends on FAD as a cofactor.

It carries out the reaction Hg + NADP(+) + H(+) = Hg(2+) + NADPH. In terms of biological role, resistance to Hg(2+) in bacteria appears to be governed by a specialized system which includes mercuric reductase. MerA protein is responsible for volatilizing mercury as Hg(0). The protein is Mercuric reductase (merA) of Serratia marcescens.